Here is a 266-residue protein sequence, read N- to C-terminus: Translation initiation factor 2 subunit alpha (266 aa).

Residues 10 to 81 form the S1 motif domain; sequence GELVVGKIDE…SAQQIDLSIK (72 aa). Positions 233–266 are disordered; the sequence is AEDALEESADRAAKVVEQHGGSGQFHRERSEDDE. Composition is skewed to basic and acidic residues over residues 240–249 and 257–266; these read SADRAAKVVE and FHRERSEDDE.

The protein belongs to the eIF-2-alpha family. As to quaternary structure, heterotrimer composed of an alpha, a beta and a gamma chain.

EIF-2 functions in the early steps of protein synthesis by forming a ternary complex with GTP and initiator tRNA. The protein is Translation initiation factor 2 subunit alpha of Haloarcula marismortui (strain ATCC 43049 / DSM 3752 / JCM 8966 / VKM B-1809) (Halobacterium marismortui).